We begin with the raw amino-acid sequence, 269 residues long: 3-methyl-2-oxobutanoate hydroxymethyltransferase (269 aa).

Asp-43 and Asp-82 together coordinate Mg(2+). Residues 43-44 (DS), Asp-82, and Lys-110 contribute to the 3-methyl-2-oxobutanoate site. Glu-112 contacts Mg(2+). The Proton acceptor role is filled by Glu-179.

This sequence belongs to the PanB family. As to quaternary structure, homodecamer; pentamer of dimers. The cofactor is Mg(2+).

It localises to the cytoplasm. It catalyses the reaction 3-methyl-2-oxobutanoate + (6R)-5,10-methylene-5,6,7,8-tetrahydrofolate + H2O = 2-dehydropantoate + (6S)-5,6,7,8-tetrahydrofolate. The protein operates within cofactor biosynthesis; (R)-pantothenate biosynthesis; (R)-pantoate from 3-methyl-2-oxobutanoate: step 1/2. Catalyzes the reversible reaction in which hydroxymethyl group from 5,10-methylenetetrahydrofolate is transferred onto alpha-ketoisovalerate to form ketopantoate. The protein is 3-methyl-2-oxobutanoate hydroxymethyltransferase of Acinetobacter baylyi (strain ATCC 33305 / BD413 / ADP1).